Reading from the N-terminus, the 132-residue chain is tRNA (cytidine(56)-2'-O)-methyltransferase (132 aa).

S-adenosyl-L-methionine-binding positions include L35, 65–69, and 83–90; these read GSEKV and IGNQPHSE.

It belongs to the aTrm56 family. In terms of assembly, homodimer.

The protein resides in the cytoplasm. The catalysed reaction is cytidine(56) in tRNA + S-adenosyl-L-methionine = 2'-O-methylcytidine(56) in tRNA + S-adenosyl-L-homocysteine + H(+). Functionally, specifically catalyzes the AdoMet-dependent 2'-O-ribose methylation of cytidine at position 56 in tRNAs. The sequence is that of tRNA (cytidine(56)-2'-O)-methyltransferase from Sulfolobus acidocaldarius (strain ATCC 33909 / DSM 639 / JCM 8929 / NBRC 15157 / NCIMB 11770).